We begin with the raw amino-acid sequence, 185 residues long: Putative F-box protein At3g17400 (185 aa).

Residues 1 to 47 form the F-box domain; sequence MMTLSDLPSDLAEEVLSKIPVTSLRGVRATCKKWNTLSKDRSFTRKH.

This is Putative F-box protein At3g17400 from Arabidopsis thaliana (Mouse-ear cress).